The following is a 238-amino-acid chain: uncharacterized protein (238 aa).

3 helical membrane-spanning segments follow: residues 75–95, 116–136, and 172–192; these read YAIF…HNFY, IVLI…FSLI, and IQGL…LEVI. Positions 200 to 238 are disordered; it reads DVEMSSMRGQAITTEPASDNTMAEETDCNTSKDVESGSN. Residues 206–220 are compositionally biased toward polar residues; that stretch reads MRGQAITTEPASDNT. Residues 229 to 238 show a composition bias toward basic and acidic residues; it reads TSKDVESGSN.

The protein localises to the membrane. This is an uncharacterized protein from Schizosaccharomyces pombe (strain 972 / ATCC 24843) (Fission yeast).